We begin with the raw amino-acid sequence, 259 residues long: Protein-L-isoaspartate O-methyltransferase (259 aa).

The disordered stretch occupies residues M1–R25. The active site involves S107.

This sequence belongs to the methyltransferase superfamily. L-isoaspartyl/D-aspartyl protein methyltransferase family.

The protein resides in the cytoplasm. It carries out the reaction [protein]-L-isoaspartate + S-adenosyl-L-methionine = [protein]-L-isoaspartate alpha-methyl ester + S-adenosyl-L-homocysteine. Its function is as follows. Catalyzes the methyl esterification of L-isoaspartyl residues in peptides and proteins that result from spontaneous decomposition of normal L-aspartyl and L-asparaginyl residues. It plays a role in the repair and/or degradation of damaged proteins. This chain is Protein-L-isoaspartate O-methyltransferase, found in Bordetella bronchiseptica (strain ATCC BAA-588 / NCTC 13252 / RB50) (Alcaligenes bronchisepticus).